The following is a 337-amino-acid chain: Putative NAC domain-containing protein 94 (337 aa).

The region spanning 20–191 (VLPGFRFHPT…AWAICRIFKK (172 aa)) is the NAC domain.

The protein localises to the nucleus. The sequence is that of Putative NAC domain-containing protein 94 (ANAC094) from Arabidopsis thaliana (Mouse-ear cress).